We begin with the raw amino-acid sequence, 261 residues long: Lysosomal-associated transmembrane protein 5 (261 aa).

5 helical membrane passes run 21-41, 65-85, 92-112, 133-153, and 183-203; these read TIAL…EHVV, SSFL…FGVV, LIPF…TLLG, VPLM…LCSS, and FINM…LKVY. The disordered stretch occupies residues 242 to 261; that stretch reads LSLPPKTPEGDPAPPPYSEV. Residues 246 to 261 are compositionally biased toward pro residues; it reads PKTPEGDPAPPPYSEV. At Tyr-258 the chain carries Phosphotyrosine.

It belongs to the LAPTM4/LAPTM5 transporter family. Binds to ubiquitin. As to expression, preferentially expressed in adult hematopoietic tissues. High levels in lymphoid and myeloid tissues.

The protein resides in the lysosome membrane. Its function is as follows. May have a special functional role during embryogenesis and in adult hematopoietic cells. The sequence is that of Lysosomal-associated transmembrane protein 5 (Laptm5) from Mus musculus (Mouse).